Consider the following 232-residue polypeptide: Putative homeobox protein NANOG2 (232 aa).

Positions methionine 1 to glutamine 39 are disordered. A compositionally biased stretch (polar residues) spans serine 11–lysine 25. Residues serine 26–proline 35 are compositionally biased toward basic and acidic residues. A run of 8 repeats spans residues tryptophan 123–threonine 127, tryptophan 128–threonine 132, tryptophan 133–threonine 137, tryptophan 143–serine 147, tryptophan 148–threonine 152, tryptophan 153–serine 157, tryptophan 158–alanine 162, and tryptophan 163–phenylalanine 167. The 8 X repeats starting with a Trp in each unit stretch occupies residues tryptophan 123–phenylalanine 167. The segment at tryptophan 123–phenylalanine 167 is sufficient for transactivation activity. The tract at residues tyrosine 168 to valine 232 is sufficient for strong transactivation activity.

This sequence belongs to the Nanog homeobox family.

The protein localises to the nucleus. Probable transcriptional regulator. This is Putative homeobox protein NANOG2 (NANOGP1) from Pan paniscus (Pygmy chimpanzee).